A 266-amino-acid chain; its full sequence is Very-long-chain aldehyde decarbonylase GL1-11 (266 aa).

A run of 4 helical transmembrane segments spans residues 25-45 (VVTF…SLLF), 74-94 (ILYH…AFKF), 106-126 (WTVI…IFYW), and 163-183 (ILFL…HLFT). One can recognise a Fatty acid hydroxylase domain in the interval 113-248 (VLFYFVLEDF…FVYMDWLFGT (136 aa)).

The protein belongs to the sterol desaturase family. In terms of assembly, homodimer.

Its subcellular location is the endoplasmic reticulum membrane. It catalyses the reaction a long-chain fatty aldehyde + 2 NADPH + O2 + H(+) = a long-chain alkane + formate + 2 NADP(+) + H2O. Functionally, aldehyde decarbonylase involved in the conversion of aldehydes to alkanes. Core component of a very-long-chain alkane synthesis complex. The polypeptide is Very-long-chain aldehyde decarbonylase GL1-11 (Oryza sativa subsp. indica (Rice)).